Reading from the N-terminus, the 241-residue chain is Eukaryotic translation initiation factor 3 subunit J (241 aa).

The interval 1–97 (MEEDWEQLSE…EEEDMTPEQK (97 aa)) is disordered. Residues 28–45 (GEDEEEEVKDSWEDEDEL) show a composition bias toward acidic residues. A coiled-coil region spans residues 31 to 119 (EEEEVKDSWE…ESDLKNALDT (89 aa)). Basic and acidic residues-rich tracts occupy residues 46 to 58 (EEKK…ETPK) and 69 to 87 (IADK…RLEK).

The protein belongs to the eIF-3 subunit J family. In terms of assembly, component of the eukaryotic translation initiation factor 3 (eIF-3) complex.

The protein resides in the cytoplasm. Component of the eukaryotic translation initiation factor 3 (eIF-3) complex, which is involved in protein synthesis of a specialized repertoire of mRNAs and, together with other initiation factors, stimulates binding of mRNA and methionyl-tRNAi to the 40S ribosome. The eIF-3 complex specifically targets and initiates translation of a subset of mRNAs involved in cell proliferation. In Aedes aegypti (Yellowfever mosquito), this protein is Eukaryotic translation initiation factor 3 subunit J.